A 426-amino-acid polypeptide reads, in one-letter code: Proline--tRNA ligase (426 aa).

The protein belongs to the class-II aminoacyl-tRNA synthetase family. ProS type 2 subfamily. In terms of assembly, homodimer.

It is found in the cytoplasm. It catalyses the reaction tRNA(Pro) + L-proline + ATP = L-prolyl-tRNA(Pro) + AMP + diphosphate. Its function is as follows. Catalyzes the attachment of proline to tRNA(Pro) in a two-step reaction: proline is first activated by ATP to form Pro-AMP and then transferred to the acceptor end of tRNA(Pro). The chain is Proline--tRNA ligase from Rickettsia africae (strain ESF-5).